Reading from the N-terminus, the 580-residue chain is TRAF-type zinc finger domain-containing protein 1 (580 aa).

At alanine 2 the chain carries N-acetylalanine. Residues 27-103 (IHEIHCQRNI…DLELSVVKLK (77 aa)) form a TRAF-type zinc finger. A phosphoserine mark is found at serine 278, serine 320, serine 326, serine 327, serine 409, serine 415, serine 430, serine 450, serine 469, and serine 532. Disordered stretches follow at residues 395 to 453 (TANH…SPNR), 468 to 509 (PSGP…ASGH), and 524 to 580 (FAPS…EEEE). The span at 407-417 (QDSQPENTSAE) shows a compositional bias: polar residues.

In terms of assembly, interacts with MAVS, TICAM1, TRAF1, TRAF2, TRAF3 and TRAF6. Expressed in skeletal muscle, brain, liver, kidney, spleen and bone marrow. Expression depends on STAT1.

Functionally, negative feedback regulator that controls excessive innate immune responses. Regulates both Toll-like receptor 4 (TLR4) and DDX58/RIG1-like helicases (RLH) pathways. May inhibit the LTR pathway by direct interaction with TRAF6 and attenuation of NF-kappa-B activation. May negatively regulate the RLH pathway downstream from MAVS and upstream of NF-kappa-B and IRF3. In Mus musculus (Mouse), this protein is TRAF-type zinc finger domain-containing protein 1 (Trafd1).